Reading from the N-terminus, the 56-residue chain is GSICLEPKVVGPCTAYFPRFYFDSETGKCTPFIYGGCEGNGNNFETLHACRAICRA.

The BPTI/Kunitz inhibitor domain maps to 4–54 (CLEPKVVGPCTAYFPRFYFDSETGKCTPFIYGGCEGNGNNFETLHACRAIC). Disulfide bonds link Cys-4/Cys-54, Cys-13/Cys-37, and Cys-29/Cys-50.

It belongs to the venom Kunitz-type family. Sea anemone type 2 potassium channel toxin subfamily. Post-translationally, contains three disulfide bonds.

The protein resides in the secreted. Its subcellular location is the nematocyst. Functionally, serine protease inhibitor that inhibits trypsin (Ki=73.8 nM) and chymotrypsin (Ki=993 nM). The chain is PI-stichotoxin-Hmg3c from Heteractis magnifica (Magnificent sea anemone).